The primary structure comprises 364 residues: Bifunctional protein Rv2228c (364 aa).

The region spanning 1–139 (MKVVIEADGG…MDAAAQSAAA (139 aa)) is the RNase H type-1 domain. Positions 8, 49, 73, and 123 each coordinate Mg(2+). The active-site Tele-phosphohistidine intermediate is the histidine 172. Glutamate 246 serves as the catalytic Proton donor/acceptor; for phosphatase activity.

It in the N-terminal section; belongs to the RNase H family. The protein in the C-terminal section; belongs to the histidine phosphatase superfamily. In terms of assembly, the N-terminal domain alone is monomeric in solution but associates in the crystal to form a dimer. The cofactor is Mg(2+).

It carries out the reaction Endonucleolytic cleavage to 5'-phosphomonoester.. The enzyme catalyses adenosylcob(III)alamin 5'-phosphate + H2O = adenosylcob(III)alamin + phosphate. It catalyses the reaction alpha-ribazole 5'-phosphate + H2O = alpha-ribazole + phosphate. The protein operates within nucleoside biosynthesis; alpha-ribazole biosynthesis; alpha-ribazole from 5,6-dimethylbenzimidazole: step 2/2. Functionally, endonuclease that displays both RNase H activity with a hybrid RNA/DNA substrate as well as double-stranded RNase activity. As the only authenticated RNase HI in M.tuberculosis, probably plays an important role in the physiology of this organism, being likely involved in bacterial replication. Catalyzes the hydrolysis of the phospho group from alpha-ribazole 5'-phosphate to form alpha-ribazole. May also catalyze the conversion of adenosylcobalamin 5'-phosphate to adenosylcobalamin (vitamin B12). Has a possible role in B12 recycling, but the primary role of the C-terminal domain of this phosphatase enzyme could be phosphate generation to help bacterial survival within the macrophage, which is a phosphate-deprived environment. The sequence is that of Bifunctional protein Rv2228c from Mycobacterium tuberculosis (strain ATCC 25618 / H37Rv).